Here is a 306-residue protein sequence, read N- to C-terminus: MNEIKTADNAKTYCGFIAIVGRPNVGKSTLLNKILGQKISITSRKAQTTRHRIVGIHTDGPYQAVYVDTPGLHIEEKRAINRLMNRAASSAIGDVDLIIFVVDGTHWNEDDEMVLNKLRAAKAPVVLAINKIDNIKNKEEMLPFITELTSKFDFAHVVPISAQGGKNIAELEKIVRESLHEGTHHFPEEYVTDRSQRFMASEIIREKLMRFTGDELPYSVTVEIEQFKLNERGTYEINGLILVEREGQKKMVIGNKGQKIKQIGIEARADMERLFDNKVHLELWVKVKSGWADDERALRSLGYMDE.

The region spanning 13-181 is the Era-type G domain; sequence YCGFIAIVGR…EKIVRESLHE (169 aa). Positions 21-28 are G1; the sequence is GRPNVGKS. Residue 21-28 participates in GTP binding; that stretch reads GRPNVGKS. The segment at 47–51 is G2; the sequence is QTTRH. The segment at 68 to 71 is G3; that stretch reads DTPG. GTP-binding positions include 68 to 72 and 130 to 133; these read DTPGL and NKID. The G4 stretch occupies residues 130-133; it reads NKID. The segment at 160–162 is G5; that stretch reads ISA. The 78-residue stretch at 212 to 289 folds into the KH type-2 domain; sequence TGDELPYSVT…HLELWVKVKS (78 aa).

This sequence belongs to the TRAFAC class TrmE-Era-EngA-EngB-Septin-like GTPase superfamily. Era GTPase family. In terms of assembly, monomer.

It localises to the cytoplasm. Its subcellular location is the cell inner membrane. Its function is as follows. An essential GTPase that binds both GDP and GTP, with rapid nucleotide exchange. Plays a role in 16S rRNA processing and 30S ribosomal subunit biogenesis and possibly also in cell cycle regulation and energy metabolism. The sequence is that of GTPase Era from Pasteurella multocida (strain Pm70).